We begin with the raw amino-acid sequence, 1001 residues long: Serine/threonine-protein kinase TAO1-B (1001 aa).

The 254-residue stretch at 28-281 folds into the Protein kinase domain; sequence FSDLREIGHG…SDELLKHMFV (254 aa). Residues 34-42 and Lys-57 each bind ATP; that span reads IGHGSFGAV. Catalysis depends on Asp-151, which acts as the Proton acceptor. Disordered stretches follow at residues 324–435 and 567–586; these read PAVE…YRNR and KEELNENQSTPKKEKQEWLS. The segment covering 350-370 has biased composition (low complexity); that stretch reads SNQSIPSMSISASSQSSSVNS. 2 stretches are compositionally biased toward basic and acidic residues: residues 375 to 388 and 577 to 586; these read SDDKSELDMMEGDH and PKKEKQEWLS. 2 coiled-coil regions span residues 458-651 and 754-877; these read SELR…EHAM and KAVL…EIEA. The disordered stretch occupies residues 911-1001; it reads SHNPTGGPGP…ISNGSHMSYT (91 aa). Residues 921 to 930 show a composition bias toward low complexity; that stretch reads HWGHPMAGPP. 2 stretches are compositionally biased toward polar residues: residues 949–967 and 975–1001; these read GSVQGVSRGSTMGVRNSPQ and GGRTEQGMSRSTSVTSQISNGSHMSYT.

The protein belongs to the protein kinase superfamily. STE Ser/Thr protein kinase family. STE20 subfamily.

The protein localises to the cytoplasm. It carries out the reaction L-seryl-[protein] + ATP = O-phospho-L-seryl-[protein] + ADP + H(+). The catalysed reaction is L-threonyl-[protein] + ATP = O-phospho-L-threonyl-[protein] + ADP + H(+). In terms of biological role, serine/threonine-protein kinase involved in various processes such as p38/mapk14 stress-activated MAPK cascade, DNA damage response and regulation of cytoskeleton stability. Acts as an activator of the p38/MAPK14 stress-activated MAPK cascade by mediating phosphorylation and subsequent activation of upstream MAP kinase kinases. In response to DNA damage, involved in the G2/M transition DNA damage checkpoint by activating the p38/MAPK14 stress-activated MAPK cascade. The protein is Serine/threonine-protein kinase TAO1-B (taok1-b) of Xenopus laevis (African clawed frog).